Reading from the N-terminus, the 536-residue chain is Chaperonin GroEL 2 (536 aa).

Residues 29–32 (TLGP), 86–90 (DGTTT), Gly-413, 476–478 (NAA), and Asp-492 each bind ATP.

The protein belongs to the chaperonin (HSP60) family. Forms a cylinder of 14 subunits composed of two heptameric rings stacked back-to-back. Interacts with the co-chaperonin GroES.

The protein localises to the cytoplasm. The enzyme catalyses ATP + H2O + a folded polypeptide = ADP + phosphate + an unfolded polypeptide.. Its function is as follows. Together with its co-chaperonin GroES, plays an essential role in assisting protein folding. The GroEL-GroES system forms a nano-cage that allows encapsulation of the non-native substrate proteins and provides a physical environment optimized to promote and accelerate protein folding. This Moorella thermoacetica (strain ATCC 39073 / JCM 9320) protein is Chaperonin GroEL 2.